The sequence spans 215 residues: Ras-related protein Rab-14 (215 aa).

Position 2 is an N-acetylalanine (A2). Residues G21, V22, G23, K24, S25, C26, A38, D39, C40, H42, and T43 each contribute to the GTP site. S25 contributes to the Mg(2+) binding site. Positions 42–47 (HTIGVE) match the Switch 1 motif. Mg(2+) is bound by residues T43 and D66. The short motif at 68–77 (AGQERFRAVT) is the Switch 2 element. G69, N124, K125, D127, A155, and K156 together coordinate GTP. A disordered region spans residues 188–215 (SGVQHKPSAPQGGRLTSEPQPQREGCGC). 2 S-geranylgeranyl cysteine lipidation sites follow: C213 and C215. A Cysteine methyl ester modification is found at C215.

It belongs to the small GTPase superfamily. Rab family. The cofactor is Mg(2+).

The protein localises to the recycling endosome. Its subcellular location is the early endosome membrane. It localises to the golgi apparatus membrane. It is found in the golgi apparatus. The protein resides in the trans-Golgi network membrane. The protein localises to the cytoplasmic vesicle. Its subcellular location is the phagosome. It catalyses the reaction GTP + H2O = GDP + phosphate + H(+). With respect to regulation, regulated by guanine nucleotide exchange factors (GEFs) including DENND6A and DENND6B which promote the exchange of bound GDP for free GTP. Regulated by GTPase activating proteins (GAPs) which increase the GTP hydrolysis activity. Inhibited by GDP dissociation inhibitors (GDIs) which prevent Rab-GDP dissociation. The small GTPases Rab are key regulators of intracellular membrane trafficking, from the formation of transport vesicles to their fusion with membranes. Rabs cycle between an inactive GDP-bound form and an active GTP-bound form that is able to recruit to membranes different set of downstream effectors directly responsible for vesicle formation, movement, tethering and fusion. Involved in membrane trafficking between the Golgi complex and endosomes during early embryonic development. Regulates the Golgi to endosome transport of FGFR-containing vesicles during early development, a key process for developing basement membrane and epiblast and primitive endoderm lineages during early postimplantation development. May act by modulating the kinesin KIF16B-cargo association to endosomes. Regulates, together with its guanine nucleotide exchange factor DENND6A, the specific endocytic transport of ADAM10, N-cadherin/CDH2 shedding and cell-cell adhesion. Mediates endosomal tethering and fusion through the interaction with RUFY1 and RAB4B. Interaction with RAB11FIP1 may function in the process of neurite formation. This Gallus gallus (Chicken) protein is Ras-related protein Rab-14 (RAB14).